Here is a 317-residue protein sequence, read N- to C-terminus: tRNA dimethylallyltransferase (317 aa).

14-21 (GPTASGKT) provides a ligand contact to ATP. 16 to 21 (TASGKT) is a substrate binding site. 2 interaction with substrate tRNA regions span residues 39 to 42 (DSAL) and 163 to 167 (QRIQR).

The protein belongs to the IPP transferase family. As to quaternary structure, monomer. Mg(2+) serves as cofactor.

The catalysed reaction is adenosine(37) in tRNA + dimethylallyl diphosphate = N(6)-dimethylallyladenosine(37) in tRNA + diphosphate. Catalyzes the transfer of a dimethylallyl group onto the adenine at position 37 in tRNAs that read codons beginning with uridine, leading to the formation of N6-(dimethylallyl)adenosine (i(6)A). In Stenotrophomonas maltophilia (strain K279a), this protein is tRNA dimethylallyltransferase.